A 469-amino-acid polypeptide reads, in one-letter code: D-3-phosphoglycerate dehydrogenase 2 (469 aa).

The residue at position 2 (serine 2) is an N-acetylserine. 3 positions are modified to phosphoserine: serine 22, serine 29, and serine 33. Residues 208 to 209 (HI), aspartate 228, 285 to 287 (ASR), and aspartate 311 each bind NAD(+). Arginine 287 is a catalytic residue. Glutamate 316 is a catalytic residue. Residue histidine 347 is the Proton donor of the active site. Position 347–350 (347–350 (HIGG)) interacts with NAD(+). Residues 399-469 (RVLYIHRNVP…SAKVSIRLLY (71 aa)) enclose the ACT domain.

It belongs to the D-isomer specific 2-hydroxyacid dehydrogenase family.

The catalysed reaction is (2R)-3-phosphoglycerate + NAD(+) = 3-phosphooxypyruvate + NADH + H(+). The enzyme catalyses (R)-2-hydroxyglutarate + NAD(+) = 2-oxoglutarate + NADH + H(+). It functions in the pathway amino-acid biosynthesis; L-serine biosynthesis; L-serine from 3-phospho-D-glycerate: step 1/3. In terms of biological role, catalyzes the reversible oxidation of 3-phospho-D-glycerate to 3-phosphonooxypyruvate, the first step of the phosphorylated L-serine biosynthesis pathway. Also catalyzes the reversible oxidation of 2-hydroxyglutarate to 2-oxoglutarate. This chain is D-3-phosphoglycerate dehydrogenase 2 (SER33), found in Saccharomyces cerevisiae (strain ATCC 204508 / S288c) (Baker's yeast).